The sequence spans 79 residues: Short neurotoxin 3 (79 aa).

The first 23 residues, 1-23 (MKTLLLTLVVMTIVCLDLGYTLT), serve as a signal peptide directing secretion. Intrachain disulfides connect cysteine 24–cysteine 41, cysteine 34–cysteine 59, cysteine 63–cysteine 71, and cysteine 72–cysteine 77.

The protein belongs to the three-finger toxin family. Short-chain subfamily. In terms of tissue distribution, expressed by the venom gland.

It is found in the secreted. This Oxyuranus scutellatus scutellatus (Australian taipan) protein is Short neurotoxin 3.